A 154-amino-acid chain; its full sequence is Putative pre-16S rRNA nuclease (154 aa).

It belongs to the YqgF nuclease family.

Its subcellular location is the cytoplasm. Functionally, could be a nuclease involved in processing of the 5'-end of pre-16S rRNA. This is Putative pre-16S rRNA nuclease from Rickettsia conorii (strain ATCC VR-613 / Malish 7).